A 288-amino-acid chain; its full sequence is 33 kDa chaperonin (288 aa).

Intrachain disulfides connect C225/C227 and C258/C261.

This sequence belongs to the HSP33 family. In terms of processing, under oxidizing conditions two disulfide bonds are formed involving the reactive cysteines. Under reducing conditions zinc is bound to the reactive cysteines and the protein is inactive.

Its subcellular location is the cytoplasm. Redox regulated molecular chaperone. Protects both thermally unfolding and oxidatively damaged proteins from irreversible aggregation. Plays an important role in the bacterial defense system toward oxidative stress. The polypeptide is 33 kDa chaperonin (Shewanella denitrificans (strain OS217 / ATCC BAA-1090 / DSM 15013)).